The primary structure comprises 98 residues: A-type ATP synthase subunit F (98 aa).

It belongs to the V-ATPase F subunit family. The A-type ATPase is composed of subunits A(3), B(3), C, D, E(1 or 2), F, H(2), I and K(x).

The protein resides in the cell membrane. Functionally, component of the A-type ATP synthase that produces ATP from ADP in the presence of a proton gradient across the membrane. This Methanocaldococcus jannaschii (strain ATCC 43067 / DSM 2661 / JAL-1 / JCM 10045 / NBRC 100440) (Methanococcus jannaschii) protein is A-type ATP synthase subunit F.